The sequence spans 473 residues: Flavonol 3-O-glucosyltransferase UGT89B1 (473 aa).

H25 (proton acceptor) is an active-site residue. H25 is a binding site for an anthocyanidin. D127 (charge relay) is an active-site residue. 7 residues coordinate UDP-alpha-D-glucose: A348, Q350, H365, W368, N369, S370, and E373. A388 lines the an anthocyanidin pocket. D389 and Q390 together coordinate UDP-alpha-D-glucose.

The protein belongs to the UDP-glycosyltransferase family.

The catalysed reaction is a flavonol + UDP-alpha-D-glucose = a flavonol 3-O-beta-D-glucoside + UDP + H(+). It catalyses the reaction a 7-O-hydroxy-flavonol + UDP-alpha-D-glucose = a flavonol 7-O-beta-D-glucoside + UDP + H(+). In terms of biological role, possesses quercetin 3-O-glucosyltransferase, 7-O-glucosyltransferase and 4'-O-glucosyltransferase activities in vitro. Also active in vitro on benzoates and benzoate derivatives. The polypeptide is Flavonol 3-O-glucosyltransferase UGT89B1 (Arabidopsis thaliana (Mouse-ear cress)).